We begin with the raw amino-acid sequence, 1093 residues long: Probable phosphorylase b kinase regulatory subunit beta (1093 aa).

Positions 1–27 (MRDVPKSLGLSVTTPGGSSGAPDSGRH) are disordered. Calmodulin-binding regions lie at residues 6–27 (KSLG…SGRH), 751–778 (QLYH…IVDS), and 905–936 (EKLT…ILQR). Residue cysteine 1090 is the site of S-farnesyl cysteine attachment.

Belongs to the phosphorylase b kinase regulatory chain family. Although the final Cys may be farnesylated, the terminal tripeptide is probably not removed, and the C-terminus is not methylated.

It localises to the cell membrane. It functions in the pathway glycan biosynthesis; glycogen metabolism. Its function is as follows. Phosphorylase b kinase catalyzes the phosphorylation of serine in certain substrates, including troponin I. The beta chain acts as a regulatory unit and modulates the activity of the holoenzyme in response to phosphorylation. The chain is Probable phosphorylase b kinase regulatory subunit beta from Drosophila melanogaster (Fruit fly).